Here is a 313-residue protein sequence, read N- to C-terminus: Putative S-adenosyl-L-methionine-dependent methyltransferase MAV_5150 (313 aa).

S-adenosyl-L-methionine is bound by residues aspartate 139 and 168–169 (DL).

This sequence belongs to the UPF0677 family.

Its function is as follows. Exhibits S-adenosyl-L-methionine-dependent methyltransferase activity. This is Putative S-adenosyl-L-methionine-dependent methyltransferase MAV_5150 from Mycobacterium avium (strain 104).